A 100-amino-acid polypeptide reads, in one-letter code: Large ribosomal subunit protein bL28 (100 aa).

The protein belongs to the bacterial ribosomal protein bL28 family.

This Ehrlichia chaffeensis (strain ATCC CRL-10679 / Arkansas) protein is Large ribosomal subunit protein bL28.